The primary structure comprises 437 residues: GTPase Obg (437 aa).

The Obg domain occupies 2–160 (SMFLDTAKIS…RQLELELKIL (159 aa)). The OBG-type G domain maps to 161 to 338 (ADVGLVGFPS…LLEATAELLA (178 aa)). GTP contacts are provided by residues 167–174 (GFPSVGKS), 192–196 (FTTIV), 214–217 (DLPG), 284–287 (NKMD), and 319–321 (SSL). Mg(2+) is bound by residues Ser-174 and Thr-194. Residues 359 to 437 (GFAETEKDFE…IGKFEFEFVD (79 aa)) enclose the OCT domain.

The protein belongs to the TRAFAC class OBG-HflX-like GTPase superfamily. OBG GTPase family. In terms of assembly, monomer. Requires Mg(2+) as cofactor.

It is found in the cytoplasm. Functionally, an essential GTPase which binds GTP, GDP and possibly (p)ppGpp with moderate affinity, with high nucleotide exchange rates and a fairly low GTP hydrolysis rate. Plays a role in control of the cell cycle, stress response, ribosome biogenesis and in those bacteria that undergo differentiation, in morphogenesis control. The protein is GTPase Obg of Streptococcus pyogenes serotype M5 (strain Manfredo).